The sequence spans 470 residues: Putative multidrug resistance protein MdtD (470 aa).

The Periplasmic segment spans residues M1 to Q11. A helical membrane pass occupies residues L12–A32. The Cytoplasmic portion of the chain corresponds to L33–H48. Residues M49–A69 form a helical membrane-spanning segment. Residues D70–N76 are Periplasmic-facing. A helical transmembrane segment spans residues I77 to T97. The Cytoplasmic portion of the chain corresponds to L98–L101. A helical transmembrane segment spans residues V102–M124. Residues K125–T137 are Periplasmic-facing. The helical transmembrane segment at F138–V158 threads the bilayer. At E159–H164 the chain is on the cytoplasmic side. Residues W165–M185 traverse the membrane as a helical segment. Over P186–D196 the chain is Periplasmic. Residues L197–S217 form a helical membrane-spanning segment. At K218 to G221 the chain is on the cytoplasmic side. A helical membrane pass occupies residues I222–L242. The Periplasmic segment spans residues L243–T262. A helical membrane pass occupies residues F263–M283. At T284–P285 the chain is on the cytoplasmic side. Residues V286–M306 form a helical membrane-spanning segment. At V307 to S341 the chain is on the periplasmic side. Residues L342–L362 form a helical membrane-spanning segment. The Cytoplasmic portion of the chain corresponds to Q363 to S395. A helical transmembrane segment spans residues M396 to F416. Residues G417 to H430 are Periplasmic-facing. Residues V431–A451 form a helical membrane-spanning segment. The Cytoplasmic portion of the chain corresponds to R452–L470.

The protein belongs to the major facilitator superfamily. TCR/Tet family.

It localises to the cell inner membrane. The sequence is that of Putative multidrug resistance protein MdtD from Salmonella heidelberg (strain SL476).